The following is a 593-amino-acid chain: Arginine--tRNA ligase (593 aa).

The short motif at 138-148 (ANPTGPLHVGH) is the 'HIGH' region element.

The protein belongs to the class-I aminoacyl-tRNA synthetase family. Monomer.

The protein localises to the cytoplasm. The enzyme catalyses tRNA(Arg) + L-arginine + ATP = L-arginyl-tRNA(Arg) + AMP + diphosphate. In Burkholderia lata (strain ATCC 17760 / DSM 23089 / LMG 22485 / NCIMB 9086 / R18194 / 383), this protein is Arginine--tRNA ligase.